A 106-amino-acid chain; its full sequence is Transcription factor TRY (106 aa).

Residues 34 to 71 enclose the Myb-like domain; sequence TEQEEDLIFRMYRLVGDRWDLIAGRVPGRQPEEIERYW. The disordered stretch occupies residues 83-106; the sequence is RRQLHSSSHKHTKPHRPRFSIYPS. The segment covering 84–100 has biased composition (basic residues); the sequence is RQLHSSSHKHTKPHRPR.

As to quaternary structure, interacts with GL3 and thus prevents GL1 GL3 interaction. Also interacts with BHLH2. Expressed in roots, leaves, siliques and inflorescences.

It is found in the nucleus. Transcription factor. Involved in epidermal cell fate specification. Negative regulator of trichome development, including endoreplication, by lateral inhibition involving intercellular interactions. Promotes the formation of hair developing cells (trichoblasts) in H position in root epidermis, probably by inhibiting non-hair cell (atrichoblasts) formation. The chain is Transcription factor TRY (TRY) from Arabidopsis thaliana (Mouse-ear cress).